The sequence spans 672 residues: tRNA(Met) cytidine acetyltransferase TmcA (672 aa).

Residues glutamine 180, 202 to 211 (GRGKSALAGQ), and arginine 319 contribute to the ATP site. One can recognise an N-acetyltransferase domain in the interval 349–531 (IEISAFYQQA…SGCYTAMALL (183 aa)). Acetyl-CoA contacts are provided by residues 461–463 (IAV), 468–474 (QREGIGQ), and arginine 506.

Belongs to the RNA cytidine acetyltransferase family. TmcA subfamily.

It localises to the cytoplasm. It carries out the reaction cytidine(34) in elongator tRNA(Met) + acetyl-CoA + ATP + H2O = N(4)-acetylcytidine(34) in elongator tRNA(Met) + ADP + phosphate + CoA + H(+). Catalyzes the formation of N(4)-acetylcytidine (ac(4)C) at the wobble position of tRNA(Met), by using acetyl-CoA as an acetyl donor and ATP (or GTP). The protein is tRNA(Met) cytidine acetyltransferase TmcA of Salmonella typhimurium (strain LT2 / SGSC1412 / ATCC 700720).